The chain runs to 160 residues: Cyclic pyranopterin monophosphate synthase (160 aa).

Residues 75-77 (LCH) and 113-114 (ME) contribute to the substrate site. D128 is a catalytic residue.

The protein belongs to the MoaC family. Homohexamer; trimer of dimers.

The catalysed reaction is (8S)-3',8-cyclo-7,8-dihydroguanosine 5'-triphosphate = cyclic pyranopterin phosphate + diphosphate. Its pathway is cofactor biosynthesis; molybdopterin biosynthesis. Its function is as follows. Catalyzes the conversion of (8S)-3',8-cyclo-7,8-dihydroguanosine 5'-triphosphate to cyclic pyranopterin monophosphate (cPMP). The polypeptide is Cyclic pyranopterin monophosphate synthase (Beijerinckia indica subsp. indica (strain ATCC 9039 / DSM 1715 / NCIMB 8712)).